A 200-amino-acid chain; its full sequence is Elongation factor Ts (200 aa).

An involved in Mg(2+) ion dislocation from EF-Tu region spans residues 80–83 (TDFV).

This sequence belongs to the EF-Ts family.

It is found in the cytoplasm. Associates with the EF-Tu.GDP complex and induces the exchange of GDP to GTP. It remains bound to the aminoacyl-tRNA.EF-Tu.GTP complex up to the GTP hydrolysis stage on the ribosome. The sequence is that of Elongation factor Ts from Caldanaerobacter subterraneus subsp. tengcongensis (strain DSM 15242 / JCM 11007 / NBRC 100824 / MB4) (Thermoanaerobacter tengcongensis).